A 1168-amino-acid polypeptide reads, in one-letter code: Transcription-repair-coupling factor (1168 aa).

Positions Asp-633–Ile-794 constitute a Helicase ATP-binding domain. ATP is bound at residue Gly-646–Thr-653. The DEEQ box motif lies at Asp-747 to Gln-750. One can recognise a Helicase C-terminal domain in the interval Val-808–Asn-969.

In the N-terminal section; belongs to the UvrB family. It in the C-terminal section; belongs to the helicase family. RecG subfamily.

It is found in the cytoplasm. Its function is as follows. Couples transcription and DNA repair by recognizing RNA polymerase (RNAP) stalled at DNA lesions. Mediates ATP-dependent release of RNAP and its truncated transcript from the DNA, and recruitment of nucleotide excision repair machinery to the damaged site. The protein is Transcription-repair-coupling factor of Staphylococcus aureus (strain MSSA476).